The primary structure comprises 296 residues: Syntenin-2 (296 aa).

PDZ domains follow at residues 112–191 (EIHL…VRDR) and 196–271 (TVTM…IPTV).

As to quaternary structure, monomer and homodimer. Interacts with SDCBP. Interacts with TM4SF1.

The protein localises to the cytoplasm. It localises to the nucleus. The protein resides in the nucleolus. Its subcellular location is the nucleoplasm. It is found in the cell membrane. The protein localises to the nucleus speckle. Functionally, binds phosphatidylinositol 4,5-bisphosphate (PIP2). May play a role in the organization of nuclear PIP2, cell division and cell survival. The polypeptide is Syntenin-2 (Sdcbp2) (Rattus norvegicus (Rat)).